Here is a 352-residue protein sequence, read N- to C-terminus: Mitochondrial ubiquitin ligase activator of NFKB 1 (352 aa).

The Cytoplasmic portion of the chain corresponds to 1–8 (MESGGRPS). A helical transmembrane segment spans residues 9 to 29 (LCQFILLGTTSVVTAALYSVY). Residues 30 to 238 (RQKARVSQEL…LLQRQESSVR (209 aa)) are Mitochondrial intermembrane-facing. Lysine 52 participates in a covalent cross-link: Glycyl lysine isopeptide (Lys-Gly) (interchain with G-Cter in ubiquitin). Residues 239 to 259 (LWKVLALVFGFATCATLFFIL) form a helical membrane-spanning segment. Residues 260–352 (RKQYLQRQER…ITRVIPLYNS (93 aa)) are Cytoplasmic-facing. Glycyl lysine isopeptide (Lys-Gly) (interchain with G-Cter in ubiquitin) cross-links involve residues lysine 273 and lysine 299. An RING-type zinc finger spans residues 302–340 (CVVCLSSFKSCVFLECGHVCSCTECYRALPEPKKCPICR).

Homooligomer. Interacts with MAP3K7/TAK1. Interacts with UBC9. Interacts with and sumoylates DNM1L. Interacts with MAVS. Interacts with TP53 (via N-terminus); the interaction leads to ubiquitination and proteasomal degradation of TP53. Post-translationally, ubiquitinated by PRKN during mitophagy, leading to its degradation and enhancement of mitophagy. Deubiquitinated by USP30. In terms of tissue distribution, widely expressed with highest levels in the heart, skeletal muscle, placenta, kidney and liver. Barely detectable in colon and thymus.

It localises to the mitochondrion outer membrane. Its subcellular location is the peroxisome. The catalysed reaction is S-ubiquitinyl-[E2 ubiquitin-conjugating enzyme]-L-cysteine + [acceptor protein]-L-lysine = [E2 ubiquitin-conjugating enzyme]-L-cysteine + N(6)-ubiquitinyl-[acceptor protein]-L-lysine.. It functions in the pathway protein modification; protein ubiquitination. Its pathway is protein modification; protein sumoylation. Exhibits weak E3 ubiquitin-protein ligase activity. E3 ubiquitin ligases accept ubiquitin from an E2 ubiquitin-conjugating enzyme in the form of a thioester and then directly transfer the ubiquitin to targeted substrates. Can ubiquitinate AKT1 preferentially at 'Lys-284' involving 'Lys-48'-linked polyubiquitination and seems to be involved in regulation of Akt signaling by targeting phosphorylated Akt to proteasomal degradation. Mediates polyubiquitination of cytoplasmic TP53 at 'Lys-24' which targets TP53 for proteasomal degradation, thus reducing TP53 levels in the cytoplasm and mitochondrion. Proposed to preferentially act as a SUMO E3 ligase at physiological concentrations. Plays a role in the control of mitochondrial morphology by promoting mitochondrial fragmentation, and influences mitochondrial localization. Likely to promote mitochondrial fission through negatively regulating the mitochondrial fusion proteins MFN1 and MFN2, acting in a pathway that is parallel to the PRKN/PINK1 regulatory pathway. May also be involved in the sumoylation of the membrane fission protein DNM1L. Inhibits cell growth. When overexpressed, activates JNK through MAP3K7/TAK1 and induces caspase-dependent apoptosis. Involved in the modulation of innate immune defense against viruses by inhibiting RIGI-dependent antiviral response. Can mediate RIGI sumoylation and disrupt its polyubiquitination. This chain is Mitochondrial ubiquitin ligase activator of NFKB 1 (MUL1), found in Homo sapiens (Human).